The sequence spans 240 residues: Ribonuclease PH (240 aa).

Residues R87 and 125–127 (GTR) each bind phosphate.

The protein belongs to the RNase PH family. Homohexameric ring arranged as a trimer of dimers.

It carries out the reaction tRNA(n+1) + phosphate = tRNA(n) + a ribonucleoside 5'-diphosphate. Its function is as follows. Phosphorolytic 3'-5' exoribonuclease that plays an important role in tRNA 3'-end maturation. Removes nucleotide residues following the 3'-CCA terminus of tRNAs; can also add nucleotides to the ends of RNA molecules by using nucleoside diphosphates as substrates, but this may not be physiologically important. Probably plays a role in initiation of 16S rRNA degradation (leading to ribosome degradation) during starvation. This Pseudomonas syringae pv. tomato (strain ATCC BAA-871 / DC3000) protein is Ribonuclease PH.